A 418-amino-acid chain; its full sequence is MRLAPTTVLLWAWGSLQAFEIVEKENIFQRTPCPAFLVFDNTAYLADMSFELPCHCKPEDVSAVVWYYQKYLGSSHTTVLTDFDGRLLTEAAHVRVGSSMLARFSIRMFSLLVFRAQPEDSGLYFCGTRNGDYFYAYDVDIQSHKGMVASFRDKGQEPLPDEYYGSLHVFTTFWEWTPCDRCGVRGEQWRFGLCYLQNPNLSPRYIKTLPDVVSCGSRAVPWKLHLKTKYHTPELLIQSCLVSCKKNKMGEGILAIYNYVSKLGGRPWVPQVPIQFHQQRLGHGLIISCPGARPEHAVAWDKDSQPLYRTQYLKGVNRSMRVFIDHGNHLHIRFTQLSDRGIYYCWRQGLKIAGFRLGVTSRGRYPASLSDPETRTAVELTLIGYLLIAVVFVTIHLCRCCCQSRCCPNFSAQTLLQL.

The N-terminal stretch at 1–18 (MRLAPTTVLLWAWGSLQA) is a signal peptide. At 19–376 (FEIVEKENIF…ASLSDPETRT (358 aa)) the chain is on the extracellular side. An Ig-like V-type domain is found at 267 to 361 (PWVPQVPIQF…IAGFRLGVTS (95 aa)). C289 and C345 form a disulfide bridge. N317 carries an N-linked (GlcNAc...) asparagine glycan. Residues 377–397 (AVELTLIGYLLIAVVFVTIHL) traverse the membrane as a helical segment. At 398 to 418 (CRCCCQSRCCPNFSAQTLLQL) the chain is on the cytoplasmic side.

It belongs to the FAM187 family.

Its subcellular location is the membrane. The protein is Ig-like V-type domain-containing protein FAM187A (Fam187a) of Rattus norvegicus (Rat).